Here is an 870-residue protein sequence, read N- to C-terminus: Translation initiation factor IF-2 (870 aa).

The segment at 49–284 (SFQNSAPAEK…TKRKERPLPE (236 aa)) is disordered. 2 stretches are compositionally biased toward basic and acidic residues: residues 70 to 81 (RKNEKKQEDNAG) and 94 to 109 (QNND…RDHS). A compositionally biased stretch (low complexity) spans 116-127 (KPKAAALLQQFK). Composition is skewed to basic and acidic residues over residues 144 to 159 (AKKE…KKEQ) and 168 to 183 (NKES…EKKV). The span at 254 to 279 (RKRRKNKNKKRKQEQKPKKQITKRKE) shows a compositional bias: basic residues. The 170-residue stretch at 371–540 (KRPPVVTIMG…LLQADMMELK (170 aa)) folds into the tr-type G domain. The interval 380-387 (GHVDHGKT) is G1. 380–387 (GHVDHGKT) contacts GTP. A G2 region spans residues 405–409 (GITQK). The G3 stretch occupies residues 426–429 (DTPG). Residues 426–430 (DTPGH) and 480–483 (NKMD) each bind GTP. Residues 480-483 (NKMD) form a G4 region. The segment at 516–518 (SAR) is G5.

It belongs to the TRAFAC class translation factor GTPase superfamily. Classic translation factor GTPase family. IF-2 subfamily.

It localises to the cytoplasm. One of the essential components for the initiation of protein synthesis. Protects formylmethionyl-tRNA from spontaneous hydrolysis and promotes its binding to the 30S ribosomal subunits. Also involved in the hydrolysis of GTP during the formation of the 70S ribosomal complex. The sequence is that of Translation initiation factor IF-2 from Lactobacillus helveticus (strain DPC 4571).